Reading from the N-terminus, the 1127-residue chain is Disease resistance protein RPS6 (1127 aa).

Met1 is subject to N-acetylmethionine. Residues Trp12 to Met176 form the TIR domain. Glu87 is an active-site residue. LRR repeat units follow at residues Met197–Lys221, Ile540–Lys563, Pro587–Pro609, Glu610–Leu632, Ala633–Thr656, Leu658–Leu679, Asn680–Ser704, Ser766–Leu790, Tyr791–Leu813, Asp814–Ser834, and Thr835–Leu857.

As to quaternary structure, interacts with EDS1. As to expression, ubiquitous.

The enzyme catalyses NAD(+) + H2O = ADP-D-ribose + nicotinamide + H(+). In terms of biological role, disease resistance (R) protein that specifically recognizes the hopA1 type III effector avirulence protein from Pseudomonas syringae. Resistance proteins guard the plant against pathogens that contain an appropriate avirulence protein via an indirect interaction with this avirulence protein. That triggers a defense system including the hypersensitive response, which restricts the pathogen growth. The chain is Disease resistance protein RPS6 from Arabidopsis thaliana (Mouse-ear cress).